A 414-amino-acid polypeptide reads, in one-letter code: Testis-specific Y-encoded-like protein 4 (414 aa).

2 disordered regions span residues 1–129 (MSGL…AGQK) and 391–414 (PRRG…FQSG). Residues 24–40 (ASGDPDRDQCQGLREET) show a composition bias toward basic and acidic residues. The segment covering 101–112 (EAASAAEAADSS) has biased composition (low complexity).

This sequence belongs to the nucleosome assembly protein (NAP) family.

The protein is Testis-specific Y-encoded-like protein 4 (TSPYL4) of Homo sapiens (Human).